A 550-amino-acid polypeptide reads, in one-letter code: Probable methionine--tRNA ligase, cytoplasmic (550 aa).

The 'HIGH' region motif lies at 10–20 (PYVNNQPHLGN). The 'KMSKS' region signature appears at 328–332 (KFSKS). Residue Lys-331 participates in ATP binding.

The protein belongs to the class-I aminoacyl-tRNA synthetase family.

The protein localises to the cytoplasm. The enzyme catalyses tRNA(Met) + L-methionine + ATP = L-methionyl-tRNA(Met) + AMP + diphosphate. This is Probable methionine--tRNA ligase, cytoplasmic from Encephalitozoon cuniculi (strain GB-M1) (Microsporidian parasite).